A 285-amino-acid chain; its full sequence is Acetyl-coenzyme A carboxylase carboxyl transferase subunit beta (285 aa).

In terms of domain architecture, CoA carboxyltransferase N-terminal spans 23–285; that stretch reads VFRRCDGCSH…HLTAGRRARR (263 aa). Zn(2+) contacts are provided by Cys27, Cys30, Cys46, and Cys49. Residues 27 to 49 form a C4-type zinc finger; that stretch reads CDGCSHTHDAAELARTFEVCSQC.

It belongs to the AccD/PCCB family. In terms of assembly, acetyl-CoA carboxylase is a heterohexamer composed of biotin carboxyl carrier protein (AccB), biotin carboxylase (AccC) and two subunits each of ACCase subunit alpha (AccA) and ACCase subunit beta (AccD). The cofactor is Zn(2+).

Its subcellular location is the cytoplasm. The catalysed reaction is N(6)-carboxybiotinyl-L-lysyl-[protein] + acetyl-CoA = N(6)-biotinyl-L-lysyl-[protein] + malonyl-CoA. It functions in the pathway lipid metabolism; malonyl-CoA biosynthesis; malonyl-CoA from acetyl-CoA: step 1/1. Functionally, component of the acetyl coenzyme A carboxylase (ACC) complex. Biotin carboxylase (BC) catalyzes the carboxylation of biotin on its carrier protein (BCCP) and then the CO(2) group is transferred by the transcarboxylase to acetyl-CoA to form malonyl-CoA. The protein is Acetyl-coenzyme A carboxylase carboxyl transferase subunit beta of Sorangium cellulosum (strain So ce56) (Polyangium cellulosum (strain So ce56)).